The sequence spans 489 residues: Ubiquitin-like-specific protease ESD4 (489 aa).

The interval 43 to 66 (AMSEDSGKPASSNPTISRISRYPD) is disordered. A compositionally biased stretch (polar residues) spans 51-60 (PASSNPTISR). Positions 200 to 223 (ASSLEAYRKLMQSAEKRNSKLEAL) form a coiled coil. Active-site residues include histidine 380, aspartate 397, and cysteine 448.

It belongs to the peptidase C48 family. In terms of assembly, interacts with NUA (via N-terminus). Interacts with KIN10. In terms of tissue distribution, expressed in seedlings, leaves, shoots, flowers and roots.

Its subcellular location is the nucleus membrane. The enzyme catalyses Hydrolysis of the alpha-linked peptide bond in the sequence Gly-Gly-|-Ala-Thr-Tyr at the C-terminal end of the small ubiquitin-like modifier (SUMO) propeptide, Smt3, leading to the mature form of the protein. A second reaction involves the cleavage of an epsilon-linked peptide bond between the C-terminal glycine of the mature SUMO and the lysine epsilon-amino group of the target protein.. Its activity is regulated as follows. Inhibited by thiol reagent and N-ethylmaleimide, but not by ubiquitin aldehyde, pepstatin A or benzamidine HCl. In terms of biological role, protease that catalyzes two essential functions in the SUMO pathway: processing of full-length SUMOs to their mature forms and deconjugation of SUMO from targeted proteins. Cleaves precursors of SUM1 and SUM2, but not of SUM3 or SUM5. Able to release SUM1 and SUM2 from conjugates, but unable to cleave SUM3. Acts predominantly as an isopeptidase, cleaving SUMO-conjugated proteins better than SUMO peptides. Plays an important role in the control of flowering time. The polypeptide is Ubiquitin-like-specific protease ESD4 (ESD4) (Arabidopsis thaliana (Mouse-ear cress)).